The following is a 314-amino-acid chain: CD-NTase-associated protein 12 (314 aa).

In terms of domain architecture, TIR spans 5–129 (RIFIGSSSEE…VKGISLARFK (125 aa)). The segment at 160-314 (SSTLAAVYYE…DLIKIVDEDN (155 aa)) is STING domain. Residues phenylalanine 171, proline 234, and aspartate 252 each coordinate 3',3'-c-di-GMP.

This sequence in the C-terminal section; belongs to the bacterial STING family. Homodimer. Forms homodimers; in the presence of c-di-GMP forms filaments with an ordered array of parallel-stacked subunits.

It catalyses the reaction NAD(+) + H2O = ADP-D-ribose + nicotinamide + H(+). NAD(+) hydrolase activity is strongly stimulated by c-di-GMP, weakly by 3'3'-cGAMP, very weakly by c-di-AMP but not at all by 2'3'-cGAMP. Self-association of TIR domains is required for NADase activity. Effector protein of a CBASS antiviral system with NAD(+) hydrolase activity. CBASS (cyclic oligonucleotide-based antiphage signaling system) provides immunity against bacteriophage. The CD-NTase protein synthesizes cyclic nucleotides in response to infection; these serve as specific second messenger signals. The signals activate a diverse range of effectors, leading to bacterial cell death and thus abortive phage infection. A type I-(GG) CBASS system. Its function is as follows. Binds c-di-GMP (synthesized by the cognate CdnE encoded upstream in the same operon), and about 10-fold less well 3'3'-cGAMP, but not c-di-AMP, 2'-3'-cGAMP or cUMP-AMP (tested without the N-terminal TIR domain). Upon activation by c-di-GMP forms filaments which hydrolyze NAD(+); filament formation is required for enzyme activation. This chain is CD-NTase-associated protein 12, found in Capnocytophaga granulosa (strain ATCC 51502 / DSM 11449 / JCM 8566 / LMG 16022 / NCTC 12948 / B0611).